A 60-amino-acid polypeptide reads, in one-letter code: Potassium channel toxin alpha-KTx 15.8 (60 aa).

The N-terminal stretch at 1 to 22 (MKFSSIILLTLLICSMSIFGNC) is a signal peptide. Gln-23 is modified (pyrrolidone carboxylic acid). Cystine bridges form between Cys-30–Cys-50, Cys-35–Cys-55, and Cys-39–Cys-57.

It belongs to the short scorpion toxin superfamily. Potassium channel inhibitor family. Alpha-KTx 15 subfamily. In terms of tissue distribution, expressed by the venom gland.

It localises to the secreted. Blocker of A-type voltage-gated potassium channels of cerebellar granular cells. May also inhibit Kv4/KCND when coexpressed with DPP6 or DPP10. The occlusion of the outer entry of the K(+) conducting pore is partially reversible and affects both open and closed channels. It shares the same target in rat brain than BmTX3 (AC Q8I0L5) and AmmTX3 (AC P60208). Also shows a weak inhibition on Kv1.2/KCNA2 and Kv1.3/KCNA3 voltage-gated potassium channels. The sequence is that of Potassium channel toxin alpha-KTx 15.8 from Olivierus martensii (Manchurian scorpion).